The sequence spans 218 residues: Non-structural protein NP-1 (218 aa).

Disordered regions lie at residues 1-89 (MSSG…RTNP) and 195-218 (TESE…DASN). Composition is skewed to basic residues over residues 8–18 (DKHRAYKRKGS) and 27–40 (PWQP…RSPI). The segment covering 58-67 (SHLSSCTASK) has biased composition (polar residues). Basic and acidic residues predominate over residues 73 to 86 (TKTKENTSGKRDSR). The segment covering 196–205 (ESEEITDEEM) has biased composition (acidic residues).

The protein belongs to the Bocaparvovirus Non-structural protein NP-1 family.

Its subcellular location is the host nucleus. Functionally, required for the expression of the capsid proteins. Performs the splicing and internal polyadenylation of the viral capsid-encoding mRNA precursor, which allows its maturation and expression. Transactivates the viral promoter. This Human bocavirus 3 (HBoV3) protein is Non-structural protein NP-1 (NP1).